The following is a 116-amino-acid chain: DNA polymerase epsilon subunit 4 (116 aa).

The span at 1 to 10 (MAAAAPGSGA) shows a compositional bias: low complexity. Residues 1 to 36 (MAAAAPGSGAAREEEGTGGDAATPQPPAPTSAPGAR) are disordered.

As to quaternary structure, component of the DNA polymerase epsilon complex consisting of four subunits: the catalytic subunit POLE and the accessory subunits POLE2, POLE3 and POLE4. Interaction with POLE3 is a prerequisite for further binding with POLE and POLE2.

It localises to the nucleus. Functionally, accessory component of the DNA polymerase epsilon complex. Participates in DNA repair and in chromosomal DNA replication. The protein is DNA polymerase epsilon subunit 4 (POLE4) of Bos taurus (Bovine).